The following is a 343-amino-acid chain: Protein phosphatase 2C homolog 7, mitochondrial (343 aa).

Residues 1-39 (MFANVGFRTLRVSRGPLYGSCSQIISFSKRTFYSSAKSG) constitute a mitochondrion transit peptide. Residues 76-342 (IYQKLKDSIR…DDITVVVVRV (267 aa)) enclose the PPM-type phosphatase domain. Residues Asp109, Gly110, and Asp265 each coordinate Mn(2+).

Mg(2+) is required as a cofactor. Requires Mn(2+) as cofactor.

The protein localises to the mitochondrion. It catalyses the reaction O-phospho-L-seryl-[protein] + H2O = L-seryl-[protein] + phosphate. The enzyme catalyses O-phospho-L-threonyl-[protein] + H2O = L-threonyl-[protein] + phosphate. Its function is as follows. Protein phosphatase which positively regulates biosynthesis of the ubiquinone, coenzyme Q. Dephosphorylates and activates the ubiquinone biosynthesis protein CAT5/COQ7. Also dephosphorylates CIT1 on 'Ser-462', which leads to its activation. The protein is Protein phosphatase 2C homolog 7, mitochondrial (PTC7) of Saccharomyces cerevisiae (strain ATCC 204508 / S288c) (Baker's yeast).